A 176-amino-acid chain; its full sequence is dCTP deaminase (176 aa).

Residues 99 to 104 (RSTLAR) and Asp-115 contribute to the dCTP site. The active-site Proton donor/acceptor is the Glu-125. Gln-163 contacts dCTP.

It belongs to the dCTP deaminase family. As to quaternary structure, homotrimer.

It catalyses the reaction dCTP + H2O + H(+) = dUTP + NH4(+). Its pathway is pyrimidine metabolism; dUMP biosynthesis; dUMP from dCTP (dUTP route): step 1/2. Functionally, catalyzes the deamination of dCTP to dUTP. The sequence is that of dCTP deaminase from Pyrobaculum neutrophilum (strain DSM 2338 / JCM 9278 / NBRC 100436 / V24Sta) (Thermoproteus neutrophilus).